A 393-amino-acid polypeptide reads, in one-letter code: 4-hydroxyphenylpyruvate dioxygenase (393 aa).

VOC domains are found at residues 17–148 (AFDH…LLER) and 179–339 (FLDH…IFSK). Residues H182, H267, and E350 each coordinate Fe cation.

It belongs to the 4HPPD family. The cofactor is Fe cation.

The catalysed reaction is 3-(4-hydroxyphenyl)pyruvate + O2 = homogentisate + CO2. The protein operates within amino-acid degradation; L-phenylalanine degradation; acetoacetate and fumarate from L-phenylalanine: step 3/6. In terms of biological role, key enzyme in the degradation of tyrosine. The sequence is that of 4-hydroxyphenylpyruvate dioxygenase (hpd-1) from Caenorhabditis briggsae.